A 346-amino-acid chain; its full sequence is Cytosolic sulfotransferase 17 (346 aa).

89-94 (KTGTTW) lines the 3'-phosphoadenylyl sulfate pocket. His-151 functions as the Proton acceptor in the catalytic mechanism. Residues Arg-173, Ser-181, Tyr-239, and 309 to 311 (RKG) each bind 3'-phosphoadenylyl sulfate.

This sequence belongs to the sulfotransferase 1 family. As to expression, highly expressed in roots, stems and mature leaves. Low expression in young leaves and flowers. Barely detected in siliques.

The protein localises to the cytoplasm. The enzyme catalyses an aliphatic (Z)-desulfo-glucosinolate + 3'-phosphoadenylyl sulfate = a (Z)-omega-(methylsulfanyl)-N-sulfo-alkylhydroximate S-glucoside + adenosine 3',5'-bisphosphate + H(+). Its activity is regulated as follows. Inhibited by phosphoadenosine 5'-phosphate (PAP). Functionally, sulfotransferase that utilizes 3'-phospho-5'-adenylyl sulfate (PAPS) as sulfonate donor to catalyze the sulfate conjugation of desulfo-glucosinolates (dsGSs), the final step in the biosynthesis of the glucosinolate core structure. Substrate preference is desulfo-benzyl glucosinolate &gt; desulfo-6-methylthiohexyl glucosinolate. Increased specific activity with increasing chain length of desulfo-glucosinolate derived from methionine. Preferred substrate is desulfo-8-methylthiooctyl glucosinolate. The protein is Cytosolic sulfotransferase 17 (SOT17) of Arabidopsis thaliana (Mouse-ear cress).